Here is a 225-residue protein sequence, read N- to C-terminus: MKSIQIAIDGPASSGKSTVAKIIAKNLGYTYLDTGAMYRSATYLALTNGIEVTDQNRIVDLLAQYPIRFGRDENGQQLVFVGDEDVTLPIRDNQVTNNVSAVAALPLVREELVRLQQDIAQAGGIVMDGRDIGTVVLPQAELKIFLVASVEERALRRFKENTERGIETDLESLKEEIAARDYKDSNREVSPLKAADDAITFDTTGVSIEGVVKFISEKAKEILDR.

Residue 10 to 18 participates in ATP binding; it reads GPASSGKST.

The protein belongs to the cytidylate kinase family. Type 1 subfamily.

The protein resides in the cytoplasm. It catalyses the reaction CMP + ATP = CDP + ADP. It carries out the reaction dCMP + ATP = dCDP + ADP. This is Cytidylate kinase from Streptococcus suis (strain 98HAH33).